Reading from the N-terminus, the 314-residue chain is ATP synthase gamma chain (314 aa).

The protein belongs to the ATPase gamma chain family. As to quaternary structure, F-type ATPases have 2 components, CF(1) - the catalytic core - and CF(0) - the membrane proton channel. CF(1) has five subunits: alpha(3), beta(3), gamma(1), delta(1), epsilon(1). CF(0) has three main subunits: a, b and c.

The protein localises to the cellular thylakoid membrane. Its function is as follows. Produces ATP from ADP in the presence of a proton gradient across the membrane. The gamma chain is believed to be important in regulating ATPase activity and the flow of protons through the CF(0) complex. This chain is ATP synthase gamma chain, found in Rippkaea orientalis (strain PCC 8801 / RF-1) (Cyanothece sp. (strain PCC 8801)).